The chain runs to 356 residues: Protein MGF 360-3L (356 aa).

The stretch at 61–93 (KLNTALVLAVKENNEDLIMLFTEWGANINYGLL) is one ANK repeat.

It belongs to the asfivirus MGF 360 family.

Functionally, plays a role in virus cell tropism, and may be required for efficient virus replication in macrophages. This chain is Protein MGF 360-3L, found in African swine fever virus (strain Badajoz 1971 Vero-adapted) (Ba71V).